The following is a 78-amino-acid chain: Small ribosomal subunit protein bS16c (78 aa).

Belongs to the bacterial ribosomal protein bS16 family.

It localises to the plastid. The protein resides in the chloroplast. The chain is Small ribosomal subunit protein bS16c from Daucus carota (Wild carrot).